Consider the following 428-residue polypeptide: 3-phosphoshikimate 1-carboxyvinyltransferase (428 aa).

3 residues coordinate 3-phosphoshikimate: Lys20, Ser21, and Arg25. A phosphoenolpyruvate-binding site is contributed by Lys20. Phosphoenolpyruvate-binding residues include Gly92 and Arg120. 3-phosphoshikimate-binding residues include Ser166, Gln168, Asp314, and Lys341. Gln168 serves as a coordination point for phosphoenolpyruvate. The active-site Proton acceptor is the Asp314. Positions 345 and 387 each coordinate phosphoenolpyruvate.

Belongs to the EPSP synthase family. In terms of assembly, monomer.

The protein localises to the cytoplasm. The catalysed reaction is 3-phosphoshikimate + phosphoenolpyruvate = 5-O-(1-carboxyvinyl)-3-phosphoshikimate + phosphate. Its pathway is metabolic intermediate biosynthesis; chorismate biosynthesis; chorismate from D-erythrose 4-phosphate and phosphoenolpyruvate: step 6/7. Functionally, catalyzes the transfer of the enolpyruvyl moiety of phosphoenolpyruvate (PEP) to the 5-hydroxyl of shikimate-3-phosphate (S3P) to produce enolpyruvyl shikimate-3-phosphate and inorganic phosphate. The chain is 3-phosphoshikimate 1-carboxyvinyltransferase from Listeria innocua serovar 6a (strain ATCC BAA-680 / CLIP 11262).